Consider the following 326-residue polypeptide: MAEVLTVLEQPNSIKDFLKQDSNIAFLAGGVAGAVSRTVVSPFERVKILLQVQSSTTSYNRGIFSSIRQVYHEEGTKGLFRGNGLNCIRIFPYSAVQFVVYEACKKKLFHVNGNNGQEQLTNTQRLFSGALCGGCSVVATYPLDLIKTRLSIQTANLSSLNRSKAKSISKPPGIWQLLSETYRLEGGLRGLYRGVWPTSLGVVPYVALNFAVYEQLREFGVNSSDAQPSWKSNLYKLTIGAISGGVAQTITYPFDLLRRRFQVLAMGGNELGFRYTSVWDALVTIGRAEGVSGYYKGLAANLFKVVPSTAVSWLVYEVVCDSVRNW.

Solcar repeat units follow at residues 20–107 (QDSN…CKKK), 120–219 (LTNT…LREF), and 231–322 (KSNL…VCDS). 6 helical membrane passes run 24–40 (IAFL…RTVV), 84–104 (GLNC…YEAC), 126–143 (LFSG…TYPL), 195–213 (VWPT…FAVY), 237–254 (LTIG…TYPF), and 297–316 (GLAA…WLVY).

The protein belongs to the mitochondrial carrier (TC 2.A.29) family.

The protein resides in the mitochondrion inner membrane. This is an uncharacterized protein from Saccharomyces cerevisiae (strain ATCC 204508 / S288c) (Baker's yeast).